A 406-amino-acid chain; its full sequence is DNA repair protein RAD55 (406 aa).

Position 43–50 (43–50) interacts with ATP; the sequence is GPPGIGKT. A disordered region spans residues 385–406; it reads DSNDNPLPNAEGKEEIIYDSEG.

Belongs to the RecA family. RAD55 subfamily.

It localises to the nucleus. In terms of biological role, required for radiation resistance and meiotic viability and presumably acts in recombination and recombinational DNA repair pathways. This is DNA repair protein RAD55 (RAD55) from Saccharomyces cerevisiae (strain ATCC 204508 / S288c) (Baker's yeast).